A 159-amino-acid polypeptide reads, in one-letter code: Phosphopantetheine adenylyltransferase (159 aa).

A substrate-binding site is contributed by S9. Residues 9–10 and H17 each bind ATP; that span reads SF. Substrate is bound by residues K41, L74, and K88. ATP contacts are provided by residues 89 to 91, E99, and 123 to 129; these read GLR and YGYISST.

Belongs to the bacterial CoaD family. As to quaternary structure, homohexamer. Requires Mg(2+) as cofactor.

It is found in the cytoplasm. The catalysed reaction is (R)-4'-phosphopantetheine + ATP + H(+) = 3'-dephospho-CoA + diphosphate. Its pathway is cofactor biosynthesis; coenzyme A biosynthesis; CoA from (R)-pantothenate: step 4/5. Reversibly transfers an adenylyl group from ATP to 4'-phosphopantetheine, yielding dephospho-CoA (dPCoA) and pyrophosphate. This is Phosphopantetheine adenylyltransferase from Corynebacterium diphtheriae (strain ATCC 700971 / NCTC 13129 / Biotype gravis).